Reading from the N-terminus, the 331-residue chain is Ribose-phosphate pyrophosphokinase (331 aa).

55 to 57 (DGE) is an ATP binding site. Residues His148 and Asp187 each contribute to the Mg(2+) site. Residue Lys211 is part of the active site. Residues Arg213, Asp237, and 241–245 (DTAGT) contribute to the D-ribose 5-phosphate site.

The protein belongs to the ribose-phosphate pyrophosphokinase family. Class I subfamily. Homohexamer. The cofactor is Mg(2+).

It localises to the cytoplasm. It catalyses the reaction D-ribose 5-phosphate + ATP = 5-phospho-alpha-D-ribose 1-diphosphate + AMP + H(+). It participates in metabolic intermediate biosynthesis; 5-phospho-alpha-D-ribose 1-diphosphate biosynthesis; 5-phospho-alpha-D-ribose 1-diphosphate from D-ribose 5-phosphate (route I): step 1/1. Its function is as follows. Involved in the biosynthesis of the central metabolite phospho-alpha-D-ribosyl-1-pyrophosphate (PRPP) via the transfer of pyrophosphoryl group from ATP to 1-hydroxyl of ribose-5-phosphate (Rib-5-P). This Synechococcus elongatus (strain ATCC 33912 / PCC 7942 / FACHB-805) (Anacystis nidulans R2) protein is Ribose-phosphate pyrophosphokinase.